We begin with the raw amino-acid sequence, 947 residues long: Bifunctional glutamine synthetase adenylyltransferase/adenylyl-removing enzyme (947 aa).

Positions 1-440 (MTPLSSPLSQ…VFNELIGDDE (440 aa)) are adenylyl removase. Residues 450-947 (SEPWREVWQD…ASWRKWLVAV (498 aa)) are adenylyl transferase.

Belongs to the GlnE family. Mg(2+) is required as a cofactor.

It carries out the reaction [glutamine synthetase]-O(4)-(5'-adenylyl)-L-tyrosine + phosphate = [glutamine synthetase]-L-tyrosine + ADP. It catalyses the reaction [glutamine synthetase]-L-tyrosine + ATP = [glutamine synthetase]-O(4)-(5'-adenylyl)-L-tyrosine + diphosphate. Its function is as follows. Involved in the regulation of glutamine synthetase GlnA, a key enzyme in the process to assimilate ammonia. When cellular nitrogen levels are high, the C-terminal adenylyl transferase (AT) inactivates GlnA by covalent transfer of an adenylyl group from ATP to specific tyrosine residue of GlnA, thus reducing its activity. Conversely, when nitrogen levels are low, the N-terminal adenylyl removase (AR) activates GlnA by removing the adenylyl group by phosphorolysis, increasing its activity. The regulatory region of GlnE binds the signal transduction protein PII (GlnB) which indicates the nitrogen status of the cell. The chain is Bifunctional glutamine synthetase adenylyltransferase/adenylyl-removing enzyme from Salmonella paratyphi A (strain ATCC 9150 / SARB42).